A 73-amino-acid polypeptide reads, in one-letter code: UPF0154 protein LGAS_0795 (73 aa).

The chain crosses the membrane as a helical span at residues 3–23 (LGLAIFLIIIALLIGLVGGFY).

Belongs to the UPF0154 family.

Its subcellular location is the cell membrane. The polypeptide is UPF0154 protein LGAS_0795 (Lactobacillus gasseri (strain ATCC 33323 / DSM 20243 / BCRC 14619 / CIP 102991 / JCM 1131 / KCTC 3163 / NCIMB 11718 / NCTC 13722 / AM63)).